The sequence spans 369 residues: Biglycan (369 aa).

A signal peptide spans 1–16 (MCPLWLLAALLALSQA). A propeptide spanning residues 17–37 (LPFEQKAFWDFTLDDGLPMLN) is cleaved from the precursor. 2 O-linked (Xyl...) (glycosaminoglycan) serine glycosylation sites follow: serine 42 and serine 48. 2 cysteine pairs are disulfide-bonded: cysteine 64–cysteine 70 and cysteine 68–cysteine 77. LRR repeat units follow at residues 83–103 (KAVPKEISPDTTLLDLQNNDI), 104–127 (SELRKDDFKGLQHLYALVLVNNKI), 128–151 (SKIHEKAFSPLRKLQKLYISKNHL), 152–172 (VEIPPNLPSSLVELRIHDNRI), 173–196 (RKVPKGVFSGLRNMNCIEMGGNPL), 197–221 (ENSGFEPGAFDGLKLNYLRISEAKL), 222–242 (TGIPKDLPETLNELHLDHNKI), 243–266 (QAIELEDLLRYSKLYRLGLGHNQI), 267–290 (RMIENGSLSFLPTLRELHLDNNKL), 291–313 (SRVPAGLPDLKLLQVVYLHTNNI), 314–343 (TKVGVNDFCPVGFGVKRAYYNGISLFNNPV), and 344–369 (PYWEVQPATFRCVTDRLAIQFGNYKK). Residues asparagine 271 and asparagine 312 are each glycosylated (N-linked (GlcNAc...) asparagine). Cysteine 322 and cysteine 355 are oxidised to a cystine.

Belongs to the small leucine-rich proteoglycan (SLRP) family. SLRP class I subfamily. As to quaternary structure, homodimer. Forms a ternary complex with MFAP2 and ELN. In terms of processing, the two attached glycosaminoglycan chains can be either chondroitin sulfate or dermatan sulfate. Found in several connective tissues, especially in articular cartilages.

The protein resides in the secreted. It is found in the extracellular space. The protein localises to the extracellular matrix. Functionally, may be involved in collagen fiber assembly. This is Biglycan (BGN) from Ovis aries (Sheep).